A 210-amino-acid polypeptide reads, in one-letter code: Outer-membrane lipoprotein LolB (210 aa).

The signal sequence occupies residues 1–18 (MKKLTKLLSLTLLFALAG). A lipid anchor (N-palmitoyl cysteine) is attached at Cys-19. Cys-19 carries S-diacylglycerol cysteine lipidation.

It belongs to the LolB family. Monomer.

Its subcellular location is the cell outer membrane. Functionally, plays a critical role in the incorporation of lipoproteins in the outer membrane after they are released by the LolA protein. The chain is Outer-membrane lipoprotein LolB from Glaesserella parasuis serovar 5 (strain SH0165) (Haemophilus parasuis).